The following is a 504-amino-acid chain: Alpha-L-arabinofuranosidase C (504 aa).

N-linked (GlcNAc...) asparagine glycosylation is found at asparagine 81, asparagine 152, asparagine 269, and asparagine 329.

Belongs to the glycosyl hydrolase 51 family.

It is found in the secreted. It carries out the reaction Hydrolysis of terminal non-reducing alpha-L-arabinofuranoside residues in alpha-L-arabinosides.. It functions in the pathway glycan metabolism; L-arabinan degradation. Functionally, alpha-L-arabinofuranosidase involved in the degradation of arabinoxylan, a major component of plant hemicellulose. Acts only on small linear 1,5-alpha-linked L-arabinofuranosyl oligosaccharides. This is Alpha-L-arabinofuranosidase C (abfC) from Emericella nidulans (strain FGSC A4 / ATCC 38163 / CBS 112.46 / NRRL 194 / M139) (Aspergillus nidulans).